Consider the following 424-residue polypeptide: Double homeobox protein 4 (424 aa).

Polar residues predominate over residues 1–10 (MALPTPSDST). Disordered regions lie at residues 1–24 (MALPTPSDSTLPAEARGRGRRRRL), 72–102 (SRQLRQHRRESRPWPGRRGPPEGRRKRTAVT), 218–362 (LQPS…LQEP), and 388–414 (QPLLETEAPGELEASEEAASLEAPLSE). DNA-binding regions (homeobox) lie at residues 19-78 (GRRR…LRQH) and 94-153 (GRRK…PGQG). Residues 265–274 (KSREDRDPQR) are compositionally biased toward basic and acidic residues. 2 stretches are compositionally biased toward low complexity: residues 278-302 (PGPCAVAQPGPAQAGPQGQGVLAPP) and 319-329 (AGAAWEPQAGA). Residues 327–424 (AGAAPPPQPA…EEYRALLEEL (98 aa)) are required for interaction with EP300 and CREBBP, and for transcriptional activation of target genes. The important for transcriptional activation of target genes stretch occupies residues 405-424 (AASLEAPLSEEEYRALLEEL).

This sequence belongs to the paired homeobox family. Binds DNA as a monomer. Interacts (via C-terminus) with EP300 and CREBBP. In terms of tissue distribution, isoform 1: Does not seem to be expressed in normal muscle, but is detected in muscle of individuals with FSHD, and also in testis (at protein level). Isoform 1: Does not seem to be expressed in normal muscle, but in muscle of individuals with FSHD, where it may be toxic to cells. Isoform 2: Detected in skeletal muscle, fibroblasts and testis from healthy individuals.

Its subcellular location is the nucleus. It is found in the cytoplasm. Its function is as follows. Transcription factor that is selectively and transiently expressed in cleavage-stage embryos. Binds to double-stranded DNA elements with the consensus sequence 5'-TAATCTAATCA-3'. Binds to chromatin containing histone H3 acetylated at 'Lys-27' (H3K27ac) and promotes deacetylation of H3K27ac. In parallel, binds to chromatin that lacks histone H3 acetylation at 'Lys-27' (H3K27ac) and recruits EP300 and CREBBP to promote acetylation of histone H3 at 'Lys-27' at new sites. Involved in transcriptional regulation of numerous genes, primarily as transcriptional activator, but also mediates repression of a set of target genes. Promotes expression of ZSCAN4 and KDM4E, two proteins with essential roles during early embryogenesis. Promotes nuclear translocation of CTNNB1/beta-catenin and its subsequent activation of target genes. Heterologous expression in cultured embryonic stem cells mediates transcription of HERVL retrotransposons and transcripts derived from ACRO1 and HSATII satellite repeats. May activate expression of PITX1. May regulate microRNA (miRNA) expression. Inappropriate expression can inhibit myogenesis and promote apoptosis. Functionally, probably inactive as a transcriptional activator, due to the absence of the C-terminal region that is important for transcriptional activation. Can inhibit transcriptional activation mediated by isoform 1. Heterologous expression of isoform 2 has no deleterious effect on cell survival. This is Double homeobox protein 4 from Homo sapiens (Human).